The following is a 924-amino-acid chain: Periplasmic nitrate reductase (924 aa).

The tat-type signal signal peptide spans Met-1–Ala-30. The 4Fe-4S Mo/W bis-MGD-type domain maps to Trp-35–Asp-91. Positions 42, 45, 49, and 77 each coordinate [4Fe-4S] cluster. Residues Lys-79, Gln-147, Asn-172, Cys-176, Trp-209–Met-216, Met-417, Gln-421, Asn-527, Ser-552–Asp-553, Lys-575, Asp-602, and Thr-814–Ser-823 contribute to the Mo-bis(molybdopterin guanine dinucleotide) site. Trp-890 serves as a coordination point for substrate. Asn-898 and Lys-915 together coordinate Mo-bis(molybdopterin guanine dinucleotide).

It belongs to the prokaryotic molybdopterin-containing oxidoreductase family. NasA/NapA/NarB subfamily. As to quaternary structure, component of the periplasmic nitrate reductase NapAB complex composed of NapA and NapB. The cofactor is [4Fe-4S] cluster. Mo-bis(molybdopterin guanine dinucleotide) serves as cofactor. Post-translationally, predicted to be exported by the Tat system. The position of the signal peptide cleavage has not been experimentally proven.

The protein resides in the periplasm. The catalysed reaction is 2 Fe(II)-[cytochrome] + nitrate + 2 H(+) = 2 Fe(III)-[cytochrome] + nitrite + H2O. Catalytic subunit of the periplasmic nitrate reductase complex NapAB. Receives electrons from NapB and catalyzes the reduction of nitrate to nitrite. This Campylobacter jejuni subsp. jejuni serotype O:2 (strain ATCC 700819 / NCTC 11168) protein is Periplasmic nitrate reductase.